The chain runs to 232 residues: Beta-casein (232 aa).

The N-terminal stretch at 1–15 (MKVLILACRVALALA) is a signal peptide. A phosphoserine mark is found at Ser30, Ser32, Ser33, and Ser34.

Belongs to the beta-casein family. In terms of tissue distribution, mammary gland specific. Secreted in milk.

The protein localises to the secreted. In terms of biological role, important role in determination of the surface properties of the casein micelles. The chain is Beta-casein (CSN2) from Camelus dromedarius (Dromedary).